The sequence spans 732 residues: uncharacterized protein (732 aa).

Disordered regions lie at residues 38 to 90 (TTLA…NNNK) and 226 to 629 (EESP…MDYQ). Positions 47–56 (QQQQQQQQQQ) are enriched in low complexity. A compositionally biased stretch (polar residues) spans 57 to 76 (PPSSSTTKEGGATTTQDNKL). Low complexity-rich tracts occupy residues 77–89 (TANG…NNNN), 231–247 (TTTT…TTAA), and 254–318 (TTTT…GTNS). Residues 327-338 (KAKKGVPKKAPT) show a composition bias toward basic residues. Composition is skewed to low complexity over residues 339–383 (KKQP…APKT), 401–421 (KTSK…STTK), and 487–523 (SAST…IKSK). Positions 553-566 (AAAEEQEEEEEEDN) are enriched in acidic residues. Low complexity-rich tracts occupy residues 567–577 (SNGIQNNNSSN) and 593–609 (DNFS…NGLL). Positions 610–621 (SEDDDDDDDDDN) are enriched in acidic residues.

This is an uncharacterized protein from Dictyostelium discoideum (Social amoeba).